Reading from the N-terminus, the 177-residue chain is DELTA-stichotoxin-Hmg2b (177 aa).

Residues 3 to 12 are plays an important role in the hemolytic activity; the sequence is ALAGTIIAGA. The tract at residues 11–30 is N-terminal region; it reads GASLGFQILDKVLGELGKVS. Residues S54, V87, S105, P107, Y133, Y137, and Y138 each contribute to the phosphocholine site.

Belongs to the actinoporin family. Sea anemone subfamily. In terms of assembly, octamer or nonamer in membranes. Monomer in the soluble state.

It is found in the secreted. The protein localises to the nematocyst. It localises to the target cell membrane. Functionally, pore-forming protein that forms cations-selective hydrophilic pores of around 1 nm and causes cytolysis. Pore formation is a multi-step process that involves specific recognition of membrane sphingomyelin (but neither cholesterol nor phosphatidylcholine) using aromatic rich region and adjacent phosphocholine (POC) binding site, firm binding to the membrane (mainly driven by hydrophobic interactions) accompanied by the transfer of the N-terminal region to the lipid-water interface and finally pore formation after oligomerization of monomers This toxin shows hemolytic activity. In Heteractis magnifica (Magnificent sea anemone), this protein is DELTA-stichotoxin-Hmg2b.